The chain runs to 77 residues: uncharacterized protein (77 aa).

A helical membrane pass occupies residues 49–71 (LVIASLILAIILLGILYYISYQM).

Its subcellular location is the membrane. This is an uncharacterized protein from Archaeoglobus fulgidus (strain ATCC 49558 / DSM 4304 / JCM 9628 / NBRC 100126 / VC-16).